Consider the following 291-residue polypeptide: N-acetylmannosamine kinase (291 aa).

ATP-binding positions include Ala5–Lys12 and Gly132–Cys139. Residues His156, Cys166, Cys168, and Cys173 each coordinate Zn(2+).

The protein belongs to the ROK (NagC/XylR) family. NanK subfamily. Homodimer.

The catalysed reaction is an N-acyl-D-mannosamine + ATP = an N-acyl-D-mannosamine 6-phosphate + ADP + H(+). The protein operates within amino-sugar metabolism; N-acetylneuraminate degradation; D-fructose 6-phosphate from N-acetylneuraminate: step 2/5. In terms of biological role, catalyzes the phosphorylation of N-acetylmannosamine (ManNAc) to ManNAc-6-P. The sequence is that of N-acetylmannosamine kinase from Salmonella arizonae (strain ATCC BAA-731 / CDC346-86 / RSK2980).